Here is a 359-residue protein sequence, read N- to C-terminus: Protein Wnt-2 (359 aa).

The signal sequence occupies residues 1–25; it reads MNAPLAGIWPWLPLLWAWLVPEVSS. Disulfide bonds link Cys-75-Cys-86, Cys-126-Cys-134, Cys-136-Cys-156, Cys-205-Cys-219, Cys-207-Cys-214, Cys-277-Cys-308, Cys-293-Cys-303, Cys-307-Cys-347, Cys-323-Cys-338, Cys-325-Cys-335, and Cys-330-Cys-331. A lipid anchor (O-palmitoleoyl serine; by PORCN) is attached at Ser-211. The N-linked (GlcNAc...) asparagine glycan is linked to Asn-294.

It belongs to the Wnt family. In terms of processing, palmitoleoylation is required for efficient binding to frizzled receptors. Depalmitoleoylation leads to Wnt signaling pathway inhibition.

The protein resides in the secreted. It is found in the extracellular space. Its subcellular location is the extracellular matrix. In terms of biological role, ligand for members of the frizzled family of seven transmembrane receptors. Probable developmental protein. May be a signaling molecule which affects the development of discrete regions of tissues. Is likely to signal over only few cell diameters. This Echinops telfairi (Lesser hedgehog tenrec) protein is Protein Wnt-2 (WNT2).